The primary structure comprises 552 residues: CTP synthase (552 aa).

The tract at residues 1-270 (MTKFVFVTGG…DGLICDKLRL (270 aa)) is amidoligase domain. Ser-13 serves as a coordination point for CTP. UTP is bound at residue Ser-13. Residues 14 to 19 (SLGKGI) and Asp-71 each bind ATP. Residues Asp-71 and Glu-144 each coordinate Mg(2+). CTP contacts are provided by residues 151-153 (DIE), 191-196 (KTKPTQ), and Lys-227. Residues 191–196 (KTKPTQ) and Lys-227 each bind UTP. Positions 295–548 (QIAMVGKYVE…IKAAVEHQKP (254 aa)) constitute a Glutamine amidotransferase type-1 domain. Gly-357 is a binding site for L-glutamine. The active-site Nucleophile; for glutamine hydrolysis is Cys-384. L-glutamine contacts are provided by residues 385-388 (LGMQ) and Glu-408. Residues 432 to 451 (KTRSENSDLGGTMRLGAQSS) form a disordered region. Arg-474 is an L-glutamine binding site. Residues His-521 and Glu-523 contribute to the active site.

This sequence belongs to the CTP synthase family. Homotetramer.

The enzyme catalyses UTP + L-glutamine + ATP + H2O = CTP + L-glutamate + ADP + phosphate + 2 H(+). It carries out the reaction L-glutamine + H2O = L-glutamate + NH4(+). The catalysed reaction is UTP + NH4(+) + ATP = CTP + ADP + phosphate + 2 H(+). It participates in pyrimidine metabolism; CTP biosynthesis via de novo pathway; CTP from UDP: step 2/2. Its activity is regulated as follows. Allosterically activated by GTP, when glutamine is the substrate; GTP has no effect on the reaction when ammonia is the substrate. The allosteric effector GTP functions by stabilizing the protein conformation that binds the tetrahedral intermediate(s) formed during glutamine hydrolysis. Inhibited by the product CTP, via allosteric rather than competitive inhibition. Functionally, catalyzes the ATP-dependent amination of UTP to CTP with either L-glutamine or ammonia as the source of nitrogen. Regulates intracellular CTP levels through interactions with the four ribonucleotide triphosphates. The protein is CTP synthase of Acidovorax sp. (strain JS42).